Here is a 426-residue protein sequence, read N- to C-terminus: Enolase (426 aa).

A (2R)-2-phosphoglycerate-binding site is contributed by Q163. Catalysis depends on E205, which acts as the Proton donor. D242, E283, and D310 together coordinate Mg(2+). K335, R364, S365, and K386 together coordinate (2R)-2-phosphoglycerate. Residue K335 is the Proton acceptor of the active site.

Belongs to the enolase family. Mg(2+) is required as a cofactor.

It is found in the cytoplasm. Its subcellular location is the secreted. It localises to the cell surface. The catalysed reaction is (2R)-2-phosphoglycerate = phosphoenolpyruvate + H2O. Its pathway is carbohydrate degradation; glycolysis; pyruvate from D-glyceraldehyde 3-phosphate: step 4/5. Catalyzes the reversible conversion of 2-phosphoglycerate (2-PG) into phosphoenolpyruvate (PEP). It is essential for the degradation of carbohydrates via glycolysis. This chain is Enolase, found in Aquifex aeolicus (strain VF5).